A 389-amino-acid chain; its full sequence is Phospho-N-acetylmuramoyl-pentapeptide-transferase (389 aa).

10 helical membrane-spanning segments follow: residues 25 to 45 (RAVM…PWVI), 73 to 93 (TMGG…WGDL), 97 to 117 (FIWI…VDDY), 135 to 155 (FWQS…VSEA), 190 to 210 (ISYP…IVGA), 222 to 242 (GLVI…AYVM), 258 to 278 (GAGE…AFLW), 286 to 306 (VFMG…VAVI), 311 to 331 (IVLF…MLQV), and 366 to 386 (QVVV…LSTL).

This sequence belongs to the glycosyltransferase 4 family. MraY subfamily. Mg(2+) is required as a cofactor.

Its subcellular location is the cell inner membrane. It catalyses the reaction UDP-N-acetyl-alpha-D-muramoyl-L-alanyl-gamma-D-glutamyl-meso-2,6-diaminopimeloyl-D-alanyl-D-alanine + di-trans,octa-cis-undecaprenyl phosphate = di-trans,octa-cis-undecaprenyl diphospho-N-acetyl-alpha-D-muramoyl-L-alanyl-D-glutamyl-meso-2,6-diaminopimeloyl-D-alanyl-D-alanine + UMP. It functions in the pathway cell wall biogenesis; peptidoglycan biosynthesis. Catalyzes the initial step of the lipid cycle reactions in the biosynthesis of the cell wall peptidoglycan: transfers peptidoglycan precursor phospho-MurNAc-pentapeptide from UDP-MurNAc-pentapeptide onto the lipid carrier undecaprenyl phosphate, yielding undecaprenyl-pyrophosphoryl-MurNAc-pentapeptide, known as lipid I. The chain is Phospho-N-acetylmuramoyl-pentapeptide-transferase from Burkholderia multivorans (strain ATCC 17616 / 249).